Consider the following 547-residue polypeptide: uncharacterized protein (547 aa).

It to B.subtilis RocB.

This is an uncharacterized protein from Bacillus subtilis (strain 168).